Here is a 301-residue protein sequence, read N- to C-terminus: tRNA dimethylallyltransferase (301 aa).

Residue 2 to 9 (GPTASGKT) coordinates ATP. 4-9 (TASGKT) serves as a coordination point for substrate. Interaction with substrate tRNA regions lie at residues 27-30 (DSAM) and 151-155 (QRIQR).

The protein belongs to the IPP transferase family. As to quaternary structure, monomer. The cofactor is Mg(2+).

The catalysed reaction is adenosine(37) in tRNA + dimethylallyl diphosphate = N(6)-dimethylallyladenosine(37) in tRNA + diphosphate. Functionally, catalyzes the transfer of a dimethylallyl group onto the adenine at position 37 in tRNAs that read codons beginning with uridine, leading to the formation of N6-(dimethylallyl)adenosine (i(6)A). In Coxiella burnetii (strain CbuK_Q154) (Coxiella burnetii (strain Q154)), this protein is tRNA dimethylallyltransferase.